A 446-amino-acid chain; its full sequence is Argininosuccinate synthase (446 aa).

ATP contacts are provided by residues 17–25 (AFSGGLDTS) and Ala43. Residue Tyr99 participates in L-citrulline binding. Positions 129 and 131 each coordinate ATP. Thr131, Asn135, and Asp136 together coordinate L-aspartate. L-citrulline is bound at residue Asn135. Asp136 contributes to the ATP binding site. Positions 139 and 192 each coordinate L-citrulline. Residue Asp194 participates in ATP binding. L-citrulline contacts are provided by Thr201, Glu203, and Glu280.

The protein belongs to the argininosuccinate synthase family. Type 2 subfamily. As to quaternary structure, homotetramer.

The protein resides in the cytoplasm. The catalysed reaction is L-citrulline + L-aspartate + ATP = 2-(N(omega)-L-arginino)succinate + AMP + diphosphate + H(+). It participates in amino-acid biosynthesis; L-arginine biosynthesis; L-arginine from L-ornithine and carbamoyl phosphate: step 2/3. This chain is Argininosuccinate synthase, found in Polaromonas sp. (strain JS666 / ATCC BAA-500).